Reading from the N-terminus, the 478-residue chain is Endoglucanase 18 (478 aa).

The signal sequence occupies residues 1–21 (MGKLLVVMLIGMFLAFESLEA). Asparagine 29 carries N-linked (GlcNAc...) asparagine glycosylation. The active-site Nucleophile is aspartate 76. Residue histidine 398 is part of the active site. The tract at residues 433–452 (HTGAIVGGPNSSDQYSDKRT) is disordered. N-linked (GlcNAc...) asparagine glycosylation occurs at asparagine 442. Catalysis depends on residues aspartate 449 and glutamate 458.

The protein belongs to the glycosyl hydrolase 9 (cellulase E) family.

The protein localises to the secreted. The enzyme catalyses Endohydrolysis of (1-&gt;4)-beta-D-glucosidic linkages in cellulose, lichenin and cereal beta-D-glucans.. This chain is Endoglucanase 18, found in Arabidopsis thaliana (Mouse-ear cress).